We begin with the raw amino-acid sequence, 375 residues long: Alcohol dehydrogenase class-3 chain L (375 aa).

Residue alanine 1 is modified to N-acetylalanine. 7 residues coordinate Zn(2+): cysteine 46, histidine 68, cysteine 98, cysteine 101, cysteine 104, cysteine 112, and cysteine 175.

The protein belongs to the zinc-containing alcohol dehydrogenase family. Class-III subfamily. As to quaternary structure, homodimer or heterodimer with H chain. Zn(2+) serves as cofactor.

The protein resides in the cytoplasm. It carries out the reaction a primary alcohol + NAD(+) = an aldehyde + NADH + H(+). It catalyses the reaction a secondary alcohol + NAD(+) = a ketone + NADH + H(+). The catalysed reaction is S-(hydroxymethyl)glutathione + NADP(+) = S-formylglutathione + NADPH + H(+). The enzyme catalyses S-(hydroxymethyl)glutathione + NAD(+) = S-formylglutathione + NADH + H(+). In terms of biological role, class-III ADH is remarkably ineffective in oxidizing ethanol, but it readily catalyzes the oxidation of long-chain primary alcohols and the oxidation of S-(hydroxymethyl) glutathione. This chain is Alcohol dehydrogenase class-3 chain L, found in Gadus morhua (Atlantic cod).